The chain runs to 498 residues: ATP synthase subunit beta, chloroplastic (498 aa).

172-179 (GGAGVGKT) lines the ATP pocket.

This sequence belongs to the ATPase alpha/beta chains family. F-type ATPases have 2 components, CF(1) - the catalytic core - and CF(0) - the membrane proton channel. CF(1) has five subunits: alpha(3), beta(3), gamma(1), delta(1), epsilon(1). CF(0) has four main subunits: a(1), b(1), b'(1) and c(9-12).

The protein resides in the plastid. It localises to the chloroplast thylakoid membrane. The enzyme catalyses ATP + H2O + 4 H(+)(in) = ADP + phosphate + 5 H(+)(out). In terms of biological role, produces ATP from ADP in the presence of a proton gradient across the membrane. The catalytic sites are hosted primarily by the beta subunits. The sequence is that of ATP synthase subunit beta, chloroplastic from Solanum lycopersicum (Tomato).